We begin with the raw amino-acid sequence, 76 residues long: Kappa-actitoxin-Avd4g (76 aa).

Positions 1-19 (MNKALFLCLVVLCAAVVFA) are cleaved as a signal peptide. A propeptide spanning residues 20 to 31 (AEDLQKAKHAPF) is cleaved from the precursor. 3 disulfide bridges follow: cysteine 37–cysteine 72, cysteine 39–cysteine 65, and cysteine 55–cysteine 73.

This sequence belongs to the sea anemone type 3 (BDS) potassium channel toxin family. As to expression, moderately expressed in the ectodermal tissue from the distal and proximal tentacles, body wall, and oral disk.

Its subcellular location is the secreted. The protein resides in the nematocyst. In terms of biological role, blocks Kv3 voltage-gated potassium channels. Reduces blood pressure. The polypeptide is Kappa-actitoxin-Avd4g (Anemonia viridis (Snakelocks anemone)).